A 140-amino-acid chain; its full sequence is Small ribosomal subunit protein uS12 (140 aa).

Position 59 is a hydroxyproline (Pro-59).

This sequence belongs to the universal ribosomal protein uS12 family.

This Encephalitozoon cuniculi (strain GB-M1) (Microsporidian parasite) protein is Small ribosomal subunit protein uS12 (RPS23).